Here is a 405-residue protein sequence, read N- to C-terminus: Pentatricopeptide repeat-containing protein At1g11630, mitochondrial (405 aa).

A mitochondrion-targeting transit peptide spans 1 to 72 (MAFLFRIRTS…RSTSLSPDYH (72 aa)). PPR repeat units follow at residues 74 to 108 (DRIIFSVAVVTLAREKHFVAVSQLLDGFIQNQPDP), 110 to 144 (SESFAVRAIILYGRANMLDRSIQTFRNLEQYEIPR), 145 to 180 (TVKSLNALLFACLMAKDYKEANRVYLEMPKMYGIEP), 181 to 215 (DLETYNRMIRVLCESGSTSSSYSIVAEMERKWIKP), 216 to 250 (TAASFGLMIDGFYKEEKFDEVRKVMRMMDEFGVHV), 251 to 285 (GVATYNIMIQCLCKRKKSAEAKALIDGVMSCRMRP), 286 to 320 (NSVTYSLLIHGFCSEENLDEAMNLFEVMVCNGYKP), 321 to 355 (DSECYFTLIHCLCKGGDFETALILCRESMEKNWVP), and 356 to 386 (SFSVMKWLVNGLASRSKVDEAKELIAVVKEK).

This sequence belongs to the PPR family. P subfamily.

Its subcellular location is the mitochondrion. This chain is Pentatricopeptide repeat-containing protein At1g11630, mitochondrial, found in Arabidopsis thaliana (Mouse-ear cress).